We begin with the raw amino-acid sequence, 565 residues long: E3 ubiquitin-protein ligase ipaH7.8 (565 aa).

Residues 1–22 (MFSVNNTHSSVSCSPSINSNST) are disordered. Positions 1–262 (MFSVNNTHSS…YHGPQIYFSM (262 aa)) are interaction with target proteins. Residues 9 to 22 (SSVSCSPSINSNST) are compositionally biased toward low complexity. 9 LRR repeats span residues 58 to 79 (QEAVLNLSDLNLTSLPELPKHI), 80 to 97 (SALIVENNKLTSLPKLPA), 98 to 119 (FLKELNADNNRLSVIPELPESL), 120 to 137 (TTLSVRSNQLENLPVLPN), 138 to 157 (HLTSLFVENNRLYNLPALPE), 158 to 179 (KLKFLHVYYNRLTTLPDLPDKL), 180 to 199 (EILCAQRNNLVTFPQFSDRN), 202 to 223 (RQKEYYFHFNQITTLPESFSQL), and 225 to 248 (SSYRINISGNPLSTRVLQSLQRLT). Residues 263–270 (SDGQQNTL) form a linker region. Residues 271–565 (HRPLADAVTA…SENGSRLHHS (295 aa)) are E3 ubiquitin-protein ligase catalytic domain. One can recognise an NEL domain in the interval 273–565 (PLADAVTAWF…SENGSRLHHS (293 aa)). The Glycyl thioester intermediate role is filled by Cys-357.

It belongs to the LRR-containing bacterial E3 ligase family. Post-translationally, ubiquitinated in the presence of host E1 ubiquitin-activating enzyme, E2 ubiquitin-conjugating enzyme and ubiquitin.

Its subcellular location is the secreted. It is found in the host cytoplasm. The enzyme catalyses S-ubiquitinyl-[E2 ubiquitin-conjugating enzyme]-L-cysteine + [acceptor protein]-L-lysine = [E2 ubiquitin-conjugating enzyme]-L-cysteine + N(6)-ubiquitinyl-[acceptor protein]-L-lysine.. It participates in protein modification; protein ubiquitination. Functionally, E3 ubiquitin ligase effector protein that interferes with host's innate immunity. Functions to alter host cell physiology and promote bacterial survival in host tissues. Catalyzes ubiquitination of human gasdermins GSDMB and GSDMD, promoting their degradation by the proteasome, thereby preventing cell death. In contrast, activates host cell pyroptosis in mouse cells: catalyzes ubiquitination of mouse Nlrp1b allele 1 protein, releasing the cleaved C-terminal part of Nlrp1b, which polymerizes and forms the Nlrp1b inflammasome followed by host cell pyroptosis. Does not catalyze ubiquitination of mouse GSDMD. This Shigella flexneri protein is E3 ubiquitin-protein ligase ipaH7.8.